The chain runs to 333 residues: Electron transfer flavoprotein subunit alpha, mitochondrial (333 aa).

The transit peptide at 1–19 directs the protein to the mitochondrion; sequence MFRAAAPGQLRRAASLLRF. Residues 20–204 are domain I; it reads QSTLVIAEHA…GISEWLDQKL (185 aa). Lysine 59 is modified (N6-acetyllysine; alternate). The residue at position 59 (lysine 59) is an N6-succinyllysine; alternate. Lysine 62 bears the N6-acetyllysine mark. Lysine 69 bears the N6-acetyllysine; alternate mark. Lysine 69 is subject to N6-succinyllysine; alternate. Lysine 75 is modified (N6-acetyllysine). Lysine 85 carries the post-translational modification N6-acetyllysine; alternate. Lysine 85 carries the post-translational modification N6-succinyllysine; alternate. At threonine 93 the chain carries Phosphothreonine. An N6-acetyllysine mark is found at lysine 101 and lysine 139. A Phosphoserine modification is found at serine 140. Residue lysine 158 is modified to N6-acetyllysine; alternate. N6-succinyllysine; alternate is present on lysine 158. Lysine 164 is modified (N6-acetyllysine). Lysine 187 carries the post-translational modification N6-succinyllysine. The residue at position 203 (lysine 203) is an N6-acetyllysine; alternate. N6-succinyllysine; alternate is present on lysine 203. Positions 205 to 333 are domain II; that stretch reads TKSDRPELTG…PEMTEILKKK (129 aa). Lysine 216 carries the N6-succinyllysine modification. Arginine 223 serves as a coordination point for FAD. Lysine 226 and lysine 232 each carry N6-acetyllysine; alternate. 2 positions are modified to N6-succinyllysine; alternate: lysine 226 and lysine 232. FAD is bound by residues serine 248, 263–266, 281–286, and asparagine 300; these read VGQT and SGAIQH. Position 301 is an N6-succinyllysine (lysine 301). FAD is bound at residue 318–319; that stretch reads DL.

This sequence belongs to the ETF alpha-subunit/FixB family. Heterodimer composed of ETFA and ETFB. Identified in a complex that contains ETFA, ETFB and ETFRF1. Interaction with ETFRF1 promotes dissociation of the bound FAD and loss of electron transfer activity. Interacts with TASOR. It depends on FAD as a cofactor.

It is found in the mitochondrion matrix. Functionally, heterodimeric electron transfer flavoprotein that accepts electrons from several mitochondrial dehydrogenases, including acyl-CoA dehydrogenases, glutaryl-CoA and sarcosine dehydrogenase. It transfers the electrons to the main mitochondrial respiratory chain via ETF-ubiquinone oxidoreductase (ETF dehydrogenase). Required for normal mitochondrial fatty acid oxidation and normal amino acid metabolism. The sequence is that of Electron transfer flavoprotein subunit alpha, mitochondrial (Etfa) from Rattus norvegicus (Rat).